A 122-amino-acid chain; its full sequence is Basic phospholipase A2 Cdr-13 (122 aa).

Disulfide bonds link cysteine 26/cysteine 115, cysteine 28/cysteine 44, cysteine 43/cysteine 95, cysteine 49/cysteine 122, cysteine 50/cysteine 88, cysteine 57/cysteine 81, and cysteine 75/cysteine 86. Tyrosine 27, glycine 29, and glycine 31 together coordinate Ca(2+). Histidine 47 is an active-site residue. Aspartate 48 is a binding site for Ca(2+). Aspartate 89 is an active-site residue.

The cofactor is Ca(2+). In terms of tissue distribution, expressed by the venom gland.

It localises to the secreted. It catalyses the reaction a 1,2-diacyl-sn-glycero-3-phosphocholine + H2O = a 1-acyl-sn-glycero-3-phosphocholine + a fatty acid + H(+). Functionally, snake venom phospholipase A2 (PLA2) that induces myonecrosis and edema upon subcutaneous injections in mice. In vitro, causes a potent blockade of neuromuscular transmission in young chicken biventer cervicis preparation and produces cytotoxicity in murine C2C12 skeletal muscle myotubes and lack cytolytic activity upon myoblasts in vitro. PLA2 catalyzes the calcium-dependent hydrolysis of the 2-acyl groups in 3-sn-phosphoglycerides. In Crotalus durissus ruruima (South American rattlesnake), this protein is Basic phospholipase A2 Cdr-13.